A 204-amino-acid chain; its full sequence is Holliday junction branch migration complex subunit RuvA (204 aa).

The segment at 1–63 is domain I; it reads MIGKLSGKVD…EEHIHLYGFL (63 aa). Positions 64–142 are domain II; sequence TLEEKIFFNL…KISSGSAIIK (79 aa). The flexible linker stretch occupies residues 143–149; the sequence is ESLNIKN. The interval 150–204 is domain III; sequence ITPVASNEVIKALVNLGFSRFEAQNAVQGIITQNPEISIDELIKTALKNRNSNFS.

This sequence belongs to the RuvA family. As to quaternary structure, homotetramer. Forms an RuvA(8)-RuvB(12)-Holliday junction (HJ) complex. HJ DNA is sandwiched between 2 RuvA tetramers; dsDNA enters through RuvA and exits via RuvB. An RuvB hexamer assembles on each DNA strand where it exits the tetramer. Each RuvB hexamer is contacted by two RuvA subunits (via domain III) on 2 adjacent RuvB subunits; this complex drives branch migration. In the full resolvosome a probable DNA-RuvA(4)-RuvB(12)-RuvC(2) complex forms which resolves the HJ.

The protein resides in the cytoplasm. Functionally, the RuvA-RuvB-RuvC complex processes Holliday junction (HJ) DNA during genetic recombination and DNA repair, while the RuvA-RuvB complex plays an important role in the rescue of blocked DNA replication forks via replication fork reversal (RFR). RuvA specifically binds to HJ cruciform DNA, conferring on it an open structure. The RuvB hexamer acts as an ATP-dependent pump, pulling dsDNA into and through the RuvAB complex. HJ branch migration allows RuvC to scan DNA until it finds its consensus sequence, where it cleaves and resolves the cruciform DNA. In Rickettsia rickettsii (strain Iowa), this protein is Holliday junction branch migration complex subunit RuvA.